The following is a 489-amino-acid chain: Betaine aldehyde dehydrogenase (489 aa).

Residues threonine 26 and aspartate 93 each coordinate K(+). Residue 150–152 (GAW) coordinates NAD(+). Residue lysine 162 is the Charge relay system of the active site. 176-179 (KPSE) lines the NAD(+) pocket. Valine 180 contributes to the K(+) binding site. An NAD(+)-binding site is contributed by 229–232 (GVET). Leucine 245 serves as a coordination point for K(+). Residue glutamate 251 is the Proton acceptor of the active site. NAD(+) is bound by residues glycine 253, cysteine 285, and glutamate 386. Cysteine 285 serves as the catalytic Nucleophile. Position 285 is a cysteine sulfenic acid (-SOH) (cysteine 285). Residues lysine 456 and glycine 459 each contribute to the K(+) site. The active-site Charge relay system is the glutamate 463.

Belongs to the aldehyde dehydrogenase family. In terms of assembly, dimer of dimers. It depends on K(+) as a cofactor.

It carries out the reaction betaine aldehyde + NAD(+) + H2O = glycine betaine + NADH + 2 H(+). Its pathway is amine and polyamine biosynthesis; betaine biosynthesis via choline pathway; betaine from betaine aldehyde: step 1/1. Functionally, involved in the biosynthesis of the osmoprotectant glycine betaine. Catalyzes the irreversible oxidation of betaine aldehyde to the corresponding acid. The sequence is that of Betaine aldehyde dehydrogenase from Burkholderia multivorans (strain ATCC 17616 / 249).